The sequence spans 255 residues: DNA repair protein RecO (255 aa).

It belongs to the RecO family.

Functionally, involved in DNA repair and RecF pathway recombination. This Listeria monocytogenes serotype 4a (strain HCC23) protein is DNA repair protein RecO.